The chain runs to 380 residues: Protein Wnt-5a (380 aa).

The N-terminal stretch at 1-37 is a signal peptide; it reads MKKPIGILSPGVALGTAGGAMSSKFFLMALATFFSFA. The propeptide occupies 38 to 61; sequence QVVIEANSWWSLGMNNPVQMSEVY. Cys104 and Cys115 form a disulfide bridge. Residues Asn114 and Asn120 are each glycosylated (N-linked (GlcNAc...) asparagine). 10 disulfides stabilise this stretch: Cys154-Cys162, Cys164-Cys182, Cys238-Cys252, Cys240-Cys247, Cys309-Cys340, Cys325-Cys335, Cys339-Cys379, Cys355-Cys370, Cys357-Cys367, and Cys362-Cys363. Ser244 is lipidated: O-palmitoleoyl serine; by PORCN. Residues Asn312 and Asn326 are each glycosylated (N-linked (GlcNAc...) asparagine).

This sequence belongs to the Wnt family. In terms of assembly, forms a soluble 1:1 complex with AFM; this prevents oligomerization and is required for prolonged biological activity. The complex with AFM may represent the physiological form in body fluids. Homooligomer; disulfide-linked, leading to inactivation. Interacts with PORCN. Interacts with WLS. Interacts with glypican GCP3. Interacts with PKD1 (via extracellular domain). Interacts with TMEM67. Post-translationally, glycosylation is necessary for secretion but not for activity. Palmitoleoylation is required for efficient binding to frizzled receptors. Depalmitoleoylation leads to Wnt signaling pathway inhibition. In terms of processing, proteolytic processing by TIKI1 and TIKI2 promotes oxidation and formation of large disulfide-bond oligomers, leading to inactivation of WNT5A. Expressed in a gradient at the caudal end of the embryo during gastrulation and later in the distal-most aspect of several structures that extend from the body such as the limbs and genital tubercle.

The protein resides in the secreted. Its subcellular location is the extracellular space. It is found in the extracellular matrix. Its function is as follows. Ligand for members of the frizzled family of seven transmembrane receptors. Can activate or inhibit canonical Wnt signaling, depending on receptor context. In the presence of FZD4, activates beta-catenin signaling. In the presence of ROR2, inhibits the canonical Wnt pathway by promoting beta-catenin degradation through a GSK3-independent pathway which involves down-regulation of beta-catenin-induced reporter gene expression. Suppression of the canonical pathway allows chondrogenesis to occur and inhibits tumor formation. Stimulates cell migration. Decreases proliferation, migration, invasiveness and clonogenicity of carcinoma cells and may act as a tumor suppressor. Mediates motility of melanoma cells. Required during embryogenesis for extension of the primary anterior-posterior axis and for outgrowth of limbs and the genital tubercle. Inhibits type II collagen expression in chondrocytes. The chain is Protein Wnt-5a (Wnt5a) from Mus musculus (Mouse).